The chain runs to 304 residues: ATP phosphoribosyltransferase (304 aa).

It belongs to the ATP phosphoribosyltransferase family. Long subfamily. Mg(2+) is required as a cofactor.

Its subcellular location is the cytoplasm. The catalysed reaction is 1-(5-phospho-beta-D-ribosyl)-ATP + diphosphate = 5-phospho-alpha-D-ribose 1-diphosphate + ATP. The protein operates within amino-acid biosynthesis; L-histidine biosynthesis; L-histidine from 5-phospho-alpha-D-ribose 1-diphosphate: step 1/9. Feedback inhibited by histidine. Functionally, catalyzes the condensation of ATP and 5-phosphoribose 1-diphosphate to form N'-(5'-phosphoribosyl)-ATP (PR-ATP). Has a crucial role in the pathway because the rate of histidine biosynthesis seems to be controlled primarily by regulation of HisG enzymatic activity. In Xanthomonas campestris pv. campestris (strain B100), this protein is ATP phosphoribosyltransferase.